The sequence spans 294 residues: tRNA dimethylallyltransferase (294 aa).

10–17 (GPTAVGKT) serves as a coordination point for ATP. Position 12–17 (12–17 (TAVGKT)) interacts with substrate. Positions 35–38 (DSQQ) are interaction with substrate tRNA.

This sequence belongs to the IPP transferase family. In terms of assembly, monomer. Requires Mg(2+) as cofactor.

It carries out the reaction adenosine(37) in tRNA + dimethylallyl diphosphate = N(6)-dimethylallyladenosine(37) in tRNA + diphosphate. In terms of biological role, catalyzes the transfer of a dimethylallyl group onto the adenine at position 37 in tRNAs that read codons beginning with uridine, leading to the formation of N6-(dimethylallyl)adenosine (i(6)A). The sequence is that of tRNA dimethylallyltransferase from Streptococcus pneumoniae serotype 4 (strain ATCC BAA-334 / TIGR4).